Here is a 226-residue protein sequence, read N- to C-terminus: Cytochrome c oxidase subunit 2 (226 aa).

Residues 1–25 lie on the Mitochondrial intermembrane side of the membrane; it reads MNTWLLSLQNSNSPTYDMMIFFHDF. The helical transmembrane segment at 26-47 threads the bilayer; sequence TMMILIFITLLILFIMFTMINN. Residues 48–61 are Mitochondrial matrix-facing; it reads NLINRFLLQGHFIE. The helical transmembrane segment at 62–81 threads the bilayer; it reads LIWTITPMIILILIAIPSFK. Over 82–226 the chain is Mitochondrial intermembrane; the sequence is ILYLTDEMFN…YFKNWLKSFL (145 aa). Residues His160, Cys195, Glu197, Cys199, His203, and Met206 each contribute to the Cu cation site. Glu197 contacts Mg(2+).

This sequence belongs to the cytochrome c oxidase subunit 2 family. In terms of assembly, component of the cytochrome c oxidase (complex IV, CIV), a multisubunit enzyme composed of a catalytic core of 3 subunits and several supernumerary subunits. The complex exists as a monomer or a dimer and forms supercomplexes (SCs) in the inner mitochondrial membrane with ubiquinol-cytochrome c oxidoreductase (cytochrome b-c1 complex, complex III, CIII). It depends on Cu cation as a cofactor.

It localises to the mitochondrion inner membrane. It carries out the reaction 4 Fe(II)-[cytochrome c] + O2 + 8 H(+)(in) = 4 Fe(III)-[cytochrome c] + 2 H2O + 4 H(+)(out). Functionally, component of the cytochrome c oxidase, the last enzyme in the mitochondrial electron transport chain which drives oxidative phosphorylation. The respiratory chain contains 3 multisubunit complexes succinate dehydrogenase (complex II, CII), ubiquinol-cytochrome c oxidoreductase (cytochrome b-c1 complex, complex III, CIII) and cytochrome c oxidase (complex IV, CIV), that cooperate to transfer electrons derived from NADH and succinate to molecular oxygen, creating an electrochemical gradient over the inner membrane that drives transmembrane transport and the ATP synthase. Cytochrome c oxidase is the component of the respiratory chain that catalyzes the reduction of oxygen to water. Electrons originating from reduced cytochrome c in the intermembrane space (IMS) are transferred via the dinuclear copper A center (CU(A)) of subunit 2 and heme A of subunit 1 to the active site in subunit 1, a binuclear center (BNC) formed by heme A3 and copper B (CU(B)). The BNC reduces molecular oxygen to 2 water molecules using 4 electrons from cytochrome c in the IMS and 4 protons from the mitochondrial matrix. The protein is Cytochrome c oxidase subunit 2 (COII) of Lasius sp.